A 97-amino-acid chain; its full sequence is uncharacterized protein (97 aa).

A compositionally biased stretch (basic and acidic residues) spans 1–20 (MAKEQTDRTTLDLFAHERRP). Residues 1 to 30 (MAKEQTDRTTLDLFAHERRPGRPKTNPLSR) form a disordered region.

This is an uncharacterized protein from Escherichia coli O157:H7.